Consider the following 694-residue polypeptide: MANKREFSLEKTRNIGIMAHIDAGKTTTTERILYYTGKIHKIGETHEGDSQMDWMEEEKERGITITSAATTAQWKDHRINIIDTPGHVDFTIEVERSLRVLDGAVTVLDAQSGVEPQTENVWRQAENYGVPRIVFVNKMDKIGANFDFSVKSLHERLNANAIAVQMPIGAEDQFEGVIDLFDMVADVYDEDKLGAKWETIPVPDEYKEEAESRREEMIEEIAEVDDDIMEKFLGGEEISNEELKAALRRATLDLKAFPVFAGSAFKNKGVQMMLDGVVDYLPSPLDVKPYIAHDKEGNEVELLADDNKPFAALAFKIATDPFVGRLTFIRVYTGSLESGSYVLNASKNQRERVGRLLQMHANSRTEIPEVFSGDIAGAIGLKDTTTGDSLTDPAHPLILESLDIPAPVIQVSVEPKSKADRDKMDVALQKLTEEDPTFRAETNPETGETLISGMGELHLDIMVERMKREFNVEATIGEPQVAYRETFTVPTQAQGKFVRQSGGKGQYGDVWIEFTPNEGKGYEFEDAIVGGVVPREYIPSVDAGLQEAMKNGVLAGYPLIDVKAKLYDGSYHEVDSSEAAFKVAASLALKNAASKAGAVILEPIMKVQVIAPEEYLGDVMGSITARRGQMEGMEDRAGAKVINAMVPLSEMFGYATTLRSSTQGRGTFTMVMDHYSPCPKSIQAEIIKKRGGNA.

Positions Glu10–Leu285 constitute a tr-type G domain. GTP-binding positions include Ala19–Thr26, Asp83–His87, and Asn137–Asp140.

It belongs to the TRAFAC class translation factor GTPase superfamily. Classic translation factor GTPase family. EF-G/EF-2 subfamily.

Its subcellular location is the cytoplasm. Catalyzes the GTP-dependent ribosomal translocation step during translation elongation. During this step, the ribosome changes from the pre-translocational (PRE) to the post-translocational (POST) state as the newly formed A-site-bound peptidyl-tRNA and P-site-bound deacylated tRNA move to the P and E sites, respectively. Catalyzes the coordinated movement of the two tRNA molecules, the mRNA and conformational changes in the ribosome. The sequence is that of Elongation factor G from Lactobacillus delbrueckii subsp. bulgaricus (strain ATCC BAA-365 / Lb-18).